Here is an 84-residue protein sequence, read N- to C-terminus: CLAVATA3/ESR (CLE)-related protein 13 (84 aa).

The first 29 residues, Met-1–Ser-29, serve as a signal peptide directing secretion. Positions Lys-57–Lys-84 are disordered. Pro-69 and Pro-72 each carry hydroxyproline. Pro-72 carries O-linked (Ara...) hydroxyproline glycosylation.

It belongs to the CLV3/ESR signal peptide family. The O-glycosylation (arabinosylation) of the hydroxyproline Pro-72 enhances binding affinity of the CLE13p peptide for its receptor. As to expression, expressed in young nodules throughout the central tissue. Expressed in the apical region of elongated nodules, corresponding to the meristematic and early infection zones.

Its subcellular location is the secreted. It localises to the extracellular space. Its function is as follows. Signaling peptide involved in the regulation of nodulation. Moves from root to shoot to function with the receptor kinase SUNN, in a signaling pathway that plays roles during cellular differentiation, both at the onset of nodulation, and later during nodule meristem development and subsequent homeostasis. Interacts with SUNN signaling to control nodule numbers. SUNN is involved in the autoregulation of nodulation (AON), a long distance systemic signaling from root to shoot and back again, which allows legumes to limit the number of root nodules formed based on available nitrogen and previous rhizobial colonization. This chain is CLAVATA3/ESR (CLE)-related protein 13, found in Medicago truncatula (Barrel medic).